A 526-amino-acid chain; its full sequence is Tyrosine-protein kinase transforming protein Src (526 aa).

The interval methionine 1–glutamate 57 is disordered. Glycine 2 is lipidated: N-myristoyl glycine; by host. A compositionally biased stretch (basic and acidic residues) spans lysine 7–histidine 25. Residues glycine 81–serine 142 form the SH3 domain. Positions tryptophan 148–cysteine 245 constitute an SH2 domain. In terms of domain architecture, Protein kinase spans leucine 267–leucine 517. ATP contacts are provided by residues leucine 273–valine 281 and lysine 295. The Proton acceptor role is filled by aspartate 386. Tyrosine 416 is modified (phosphotyrosine; by autocatalysis).

It belongs to the protein kinase superfamily. Tyr protein kinase family. SRC subfamily. Post-translationally, the phosphorylated form is termed pp60v-src.

The catalysed reaction is L-tyrosyl-[protein] + ATP = O-phospho-L-tyrosyl-[protein] + ADP + H(+). Functionally, this phosphoprotein, required for both the initiation and the maintenance of neoplastic transformation, is a protein kinase that catalyzes the phosphorylation of tyrosine residues in vitro. The polypeptide is Tyrosine-protein kinase transforming protein Src (V-SRC) (Galliformes).